The chain runs to 97 residues: ESAT-6-like protein EsxG (97 aa).

Belongs to the WXG100 family. CFP-10 subfamily. Forms a tight 1:1 complex with EsxH.

It is found in the secreted. In Mycolicibacterium smegmatis (strain ATCC 700084 / mc(2)155) (Mycobacterium smegmatis), this protein is ESAT-6-like protein EsxG.